We begin with the raw amino-acid sequence, 415 residues long: Protrudin (415 aa).

Positions 1 to 24 (MQTSDRDLSGPEASPSGMPEVLSE) are disordered. The Cytoplasmic portion of the chain corresponds to 1-66 (MQTSDRDLSG…AGDGVRYLLR (66 aa)). A sufficient for homooligomerization region spans residues 1-92 (MQTSDRDLSG…LFLTLNEGAW (92 aa)). Positions 1-210 (MQTSDRDLSG…LYLLPLCWVL (210 aa)) are sufficient for localization to endoplasmic reticulum tubular network and for interactions with REEP1, REEP5, ATL1, ATL2, ATL3 and SPAST. Residues 51–64 (LEPLKDAGDGVRYL) form a necessary for interaction with RAB11A and function in neurite outgrowth region. A helical transmembrane segment spans residues 67-87 (WQMPLCSLLTCLGLNILFLTL). Residue N88 is a topological domain, lumenal. Residues 89–109 (EGAWYSMGALMISVPALLGYL) traverse the membrane as a helical segment. Residues 110–192 (QEVCRGQLPE…NPVVSSQFYG (83 aa)) lie on the Cytoplasmic side of the membrane. Positions 193 to 213 (ALLGMVCMLYLLPLCWVLALL) form an intramembrane region, helical. The Cytoplasmic portion of the chain corresponds to 214 to 415 (NSTLFLGNGD…CASCNQTLSK (202 aa)). Positions 254–290 (QGAGGRGLLDSSPAPTPTEDLTPGSVEEAEEAEPDEE) are disordered. The tract at residues 275–365 (TPGSVEEAEE…GCAATFSVLK (91 aa)) is necessary for interaction with KIF5A. Residues 280 to 290 (EEAEEAEPDEE) show a composition bias toward acidic residues. Positions 290-296 (EFKDAIE) are necessary for interaction with VAPA. Residues 348 to 414 (TNNFGNCAGC…VCASCNQTLS (67 aa)) form an FYVE-type zinc finger. Zn(2+)-binding residues include C354, C357, C370, C373, C378, C381, C406, and C409.

Can form homooligomers (monomers, dimers and tetramers). Interacts with RAB11A (GDP-bound form); regulates RAB11A. Interacts with FKBP8; may negatively regulate ZFYVE27 phosphorylation. Isoform 1 interacts to a greater extent than isoform 2 with VAPB (via MSP domain). Isoform 1 interacts to a greater extent than isoform 2 with VAPA (via MSP domain). Interaction with VAPA may regulate ZFYVE27 retention in the endoplasmic reticulum and its function in cell projections formation. Interacts with ATL2, ATL3, SPAST and RTN3. Interacts with REEP1, REEP5 and ATL1. Interacts with RAB11B (GDP-bound form), SURF4, KIF5B and KIF5C. Isoform 1 and 2 interact with KIFA. In terms of processing, phosphorylated. Phosphorylation is induced by NGF through the MAPK/ERK pathway and modulates interaction with RAB11A. As to expression, astrocytes express both isoform 1 and isoform 2 and oligodendrocytes express only isoform 2 (at protein level). Isoform 1 is expressed specifically in the central nervous system and selectively in neuronal cells. Isoform 2 is expressed in cerebrum, cerebellum, spinal cord, heart, thymus, spleen, intestine and lung.

Its subcellular location is the recycling endosome membrane. It is found in the endoplasmic reticulum membrane. It localises to the cell projection. The protein resides in the growth cone membrane. Functionally, key regulator of RAB11-dependent vesicular trafficking during neurite extension through polarized membrane transport. Promotes axonal elongation and contributes to the establishment of neuronal cell polarity. Involved in nerve growth factor-induced neurite formation in VAPA-dependent manner. Contributes to both the formation and stabilization of the tubular ER network. Involved in ER morphogenesis by regulating the sheet-to-tubule balance and possibly the density of tubule interconnections. Acts as an adapter protein that facilitates the interaction of KIF5A with VAPA, VAPB, SURF4, RAB11A, RAB11B and RTN3 and the ZFYVE27-KIF5A complex contributes to the transport of these proteins in neurons. Can induce formation of neurite-like membrane protrusions in non-neuronal cells in a KIF5A/B-dependent manner. The protein is Protrudin (Zfyve27) of Mus musculus (Mouse).